The sequence spans 270 residues: Tryptophan synthase alpha chain (270 aa).

Residues Glu-49 and Asp-60 each act as proton acceptor in the active site.

This sequence belongs to the TrpA family. As to quaternary structure, tetramer of two alpha and two beta chains.

The catalysed reaction is (1S,2R)-1-C-(indol-3-yl)glycerol 3-phosphate + L-serine = D-glyceraldehyde 3-phosphate + L-tryptophan + H2O. It functions in the pathway amino-acid biosynthesis; L-tryptophan biosynthesis; L-tryptophan from chorismate: step 5/5. In terms of biological role, the alpha subunit is responsible for the aldol cleavage of indoleglycerol phosphate to indole and glyceraldehyde 3-phosphate. The polypeptide is Tryptophan synthase alpha chain (Pseudomonas syringae pv. tomato (strain ATCC BAA-871 / DC3000)).